The following is a 234-amino-acid chain: Phosphoribosylaminoimidazole-succinocarboxamide synthase (234 aa).

Belongs to the SAICAR synthetase family.

The catalysed reaction is 5-amino-1-(5-phospho-D-ribosyl)imidazole-4-carboxylate + L-aspartate + ATP = (2S)-2-[5-amino-1-(5-phospho-beta-D-ribosyl)imidazole-4-carboxamido]succinate + ADP + phosphate + 2 H(+). Its pathway is purine metabolism; IMP biosynthesis via de novo pathway; 5-amino-1-(5-phospho-D-ribosyl)imidazole-4-carboxamide from 5-amino-1-(5-phospho-D-ribosyl)imidazole-4-carboxylate: step 1/2. This is Phosphoribosylaminoimidazole-succinocarboxamide synthase from Staphylococcus epidermidis (strain ATCC 35984 / DSM 28319 / BCRC 17069 / CCUG 31568 / BM 3577 / RP62A).